The primary structure comprises 378 residues: uncharacterized protein (378 aa).

The segment covering 1–11 (MSQQTTPAEQK) has biased composition (polar residues). The segment at 1 to 33 (MSQQTTPAEQKSLQRKKPPFRADQVGSLLRSEP) is disordered.

It to B.subtilis YxjH.

This is an uncharacterized protein from Bacillus subtilis (strain 168).